The sequence spans 136 residues: Large ribosomal subunit protein eL27 (136 aa).

It belongs to the eukaryotic ribosomal protein eL27 family.

In Candida albicans (Yeast), this protein is Large ribosomal subunit protein eL27 (RPL27).